Reading from the N-terminus, the 591-residue chain is Vomeromodulin (591 aa).

The N-terminal stretch at 1 to 18 (MWVLQALAIMLSIQAGTL) is a signal peptide. The tract at residues 151–172 (NEGNGDSSKPSSGSKATGGLGQ) is disordered. Residues asparagine 421 and asparagine 516 are each glycosylated (N-linked (GlcNAc...) asparagine).

In terms of processing, N-glycosylated. The N-glycans consist mainly of complex sialylated and fucosylated biantennary structures. In terms of tissue distribution, expressed in lung. Not detected in other tissues tested (at protein level).

It is found in the secreted. The sequence is that of Vomeromodulin from Mus musculus (Mouse).